The following is a 370-amino-acid chain: Flagellar P-ring protein (370 aa).

The N-terminal stretch at 1 to 27 (MPARPIPVPLLALALAAALAVPSPAAA) is a signal peptide.

This sequence belongs to the FlgI family. As to quaternary structure, the basal body constitutes a major portion of the flagellar organelle and consists of four rings (L,P,S, and M) mounted on a central rod.

Its subcellular location is the periplasm. It is found in the bacterial flagellum basal body. Its function is as follows. Assembles around the rod to form the L-ring and probably protects the motor/basal body from shearing forces during rotation. This Anaeromyxobacter sp. (strain K) protein is Flagellar P-ring protein.